Reading from the N-terminus, the 105-residue chain is Ribosomal silencing factor RsfS (105 aa).

It belongs to the Iojap/RsfS family. As to quaternary structure, interacts with ribosomal protein uL14 (rplN).

The protein resides in the cytoplasm. Functionally, functions as a ribosomal silencing factor. Interacts with ribosomal protein uL14 (rplN), blocking formation of intersubunit bridge B8. Prevents association of the 30S and 50S ribosomal subunits and the formation of functional ribosomes, thus repressing translation. This is Ribosomal silencing factor RsfS from Escherichia coli O6:H1 (strain CFT073 / ATCC 700928 / UPEC).